The sequence spans 376 residues: UPF0754 membrane protein BLi01057/BL02871 (376 aa).

Helical transmembrane passes span 1–21 and 356–376; these read MYVFGIFAVMIAVGALIGAVT and YLGGLLGGIIGAVQAIFVILI.

This sequence belongs to the UPF0754 family.

It is found in the cell membrane. The chain is UPF0754 membrane protein BLi01057/BL02871 from Bacillus licheniformis (strain ATCC 14580 / DSM 13 / JCM 2505 / CCUG 7422 / NBRC 12200 / NCIMB 9375 / NCTC 10341 / NRRL NRS-1264 / Gibson 46).